The chain runs to 119 residues: UPF0231 protein ECA3777 (119 aa).

This sequence belongs to the UPF0231 family.

This chain is UPF0231 protein ECA3777, found in Pectobacterium atrosepticum (strain SCRI 1043 / ATCC BAA-672) (Erwinia carotovora subsp. atroseptica).